The following is a 238-amino-acid chain: Ribonuclease Rh (238 aa).

Positions 1 to 16 (MKAVLALATLIGSTLA) are cleaved as a signal peptide. 5 disulfides stabilise this stretch: cysteine 19-cysteine 36, cysteine 26-cysteine 69, cysteine 35-cysteine 136, cysteine 79-cysteine 128, and cysteine 198-cysteine 229. Catalysis depends on residues histidine 62, glutamate 121, and histidine 125.

This sequence belongs to the RNase T2 family.

It carries out the reaction a ribonucleotidyl-ribonucleotide-RNA + H2O = a 3'-end 3'-phospho-ribonucleotide-RNA + a 5'-end dephospho-ribonucleoside-RNA + H(+). This is a base non-specific ribonuclease. This is Ribonuclease Rh from Rhizopus niveus.